The chain runs to 186 residues: MSVADIKKGAEQKMQRSLDAFKNDLSKIRTGRAHTGLLDHIQVDYYGSPVPISQVANLTLVDARTIGVQPWEKKMVAVVEKAIRESDLGLNPASHGDVIRVPMPPLTEERRKELTKVVKSEGETAKVAVRNLRRDANEQLKKLVKDKEISEDDERRAGDDVQKLTDKFVAEIDKLVQTKEGEIMTV.

The protein belongs to the RRF family.

Its subcellular location is the cytoplasm. In terms of biological role, responsible for the release of ribosomes from messenger RNA at the termination of protein biosynthesis. May increase the efficiency of translation by recycling ribosomes from one round of translation to another. This is Ribosome-recycling factor from Paraburkholderia phymatum (strain DSM 17167 / CIP 108236 / LMG 21445 / STM815) (Burkholderia phymatum).